Here is a 222-residue protein sequence, read N- to C-terminus: Exosome complex component Rrp4 (222 aa).

In terms of domain architecture, S1 motif spans 63-131 (GDLVIGRVTG…EINRVKLTLR (69 aa)).

The protein belongs to the RRP4 family. Component of the archaeal exosome complex. Forms a trimer of Rrp4 and/or Csl4 subunits. The trimer associates with a hexameric ring-like arrangement composed of 3 Rrp41-Rrp42 heterodimers.

It localises to the cytoplasm. In terms of biological role, non-catalytic component of the exosome, which is a complex involved in RNA degradation. Increases the RNA binding and the efficiency of RNA degradation. Confers strong poly(A) specificity to the exosome. This chain is Exosome complex component Rrp4, found in Methanosphaera stadtmanae (strain ATCC 43021 / DSM 3091 / JCM 11832 / MCB-3).